Consider the following 647-residue polypeptide: Shugoshin-2 (647 aa).

The residue at position 7 (Ser-7) is a Phosphoserine. 2 coiled-coil regions span residues 28–87 and 125–145; these read SKAQ…FHEE and DEES…HDVS. The interval 171 to 295 is disordered; the sequence is REANVFSDTQ…DTVIQSTPTK (125 aa). Residues 200-210 are compositionally biased toward low complexity; that stretch reads NLSNSKPVNNN. A Phosphoserine modification is found at Ser-240. 2 stretches are compositionally biased toward polar residues: residues 242 to 253 and 282 to 293; these read KSLSNKINNQAA and RIQSDTVIQSTP. Thr-292 carries the post-translational modification Phosphothreonine. Residues Ser-332 and Ser-335 each carry the phosphoserine modification. Composition is skewed to polar residues over residues 375–396 and 462–478; these read SLTS…NMTV and EPPS…NNSP. Disordered regions lie at residues 375–416, 453–486, 522–579, and 593–647; these read SLTS…DSSV, RNPP…SLQG, TNLK…ERKK, and RNFD…TLNL. 2 stretches are compositionally biased toward basic and acidic residues: residues 528-541 and 593-602; these read NEND…SRRE and RNFDLPSDHV. The span at 621 to 647 shows a compositional bias: polar residues; the sequence is KTETANITSEAPTTSEVTLENSETLNL.

Belongs to the shugoshin family.

Its subcellular location is the chromosome. It localises to the centromere. Functionally, involved in chromosome cohesion during mitosis and meiosis by preventing premature dissociation of cohesin complex from centromeres after prophase, when most of cohesin complex dissociates from chromosomes arms. Required for faithful mitotic chromosome segregation and proper kinetochore orientation during meiosis I. In contrast to sgo1, it is dispensable for centromeric protection of rec8 during meiosis I as well as protection of rad21 during mitosis. Required to sense the lack of tension at centromeres during mitosis. The chain is Shugoshin-2 (sgo2) from Schizosaccharomyces pombe (strain 972 / ATCC 24843) (Fission yeast).